A 166-amino-acid chain; its full sequence is Large ribosomal subunit protein uL10 (166 aa).

Belongs to the universal ribosomal protein uL10 family. As to quaternary structure, part of the ribosomal stalk of the 50S ribosomal subunit. The N-terminus interacts with L11 and the large rRNA to form the base of the stalk. The C-terminus forms an elongated spine to which L12 dimers bind in a sequential fashion forming a multimeric L10(L12)X complex.

Functionally, forms part of the ribosomal stalk, playing a central role in the interaction of the ribosome with GTP-bound translation factors. This is Large ribosomal subunit protein uL10 from Mesoplasma florum (strain ATCC 33453 / NBRC 100688 / NCTC 11704 / L1) (Acholeplasma florum).